Reading from the N-terminus, the 834-residue chain is Taste receptor type 1 member 2 (834 aa).

The signal sequence occupies residues 1 to 19 (MEPRVRTVCFLFFLLRVLA). The Extracellular portion of the chain corresponds to 20-561 (EPAKNSDFYL…SFLEWHEAAT (542 aa)). N-linked (GlcNAc...) asparagine glycosylation is found at asparagine 84, asparagine 292, asparagine 312, asparagine 363, asparagine 423, asparagine 482, and asparagine 522. A helical membrane pass occupies residues 562-582 (IAVALLAALGFLSTLAILVIF). The Cytoplasmic segment spans residues 583-597 (WRHFETPMVRSAGGP). A helical transmembrane segment spans residues 598–618 (MCFLMLTLLLVAYMVVPVYVG). Over 619–630 (LPKVSTCLCRQA) the chain is Extracellular. The helical transmembrane segment at 631–651 (LFPVCFTICISCIAVRSFQIV) threads the bilayer. Topologically, residues 652 to 676 (CVFKMASRFPRAYSYWVRYQGSYVS) are cytoplasmic. Residues 677 to 697 (VAFITALKMVTVVISLLATGL) traverse the membrane as a helical segment. Residues 698 to 722 (NPTTRTDTDDPKIMIISCNPNYRNS) lie on the Extracellular side of the membrane. A helical transmembrane segment spans residues 723–743 (LLFNTSLDLLLSVAGFSFAYM). Residues 744–755 (GKELPTNYNEAK) are Cytoplasmic-facing. A helical membrane pass occupies residues 756 to 776 (FITFSMTFYFTSSVSLCTFMS). Residues 777-779 (VYD) are Extracellular-facing. Residues 780-800 (GVLVTIVDLLVTVFNLLAISL) traverse the membrane as a helical segment. Residues 801–834 (GYFGPKCYMILFYPERNTPAYFNSMIQGYTMRRD) lie on the Cytoplasmic side of the membrane.

Belongs to the G-protein coupled receptor 3 family. TAS1R subfamily. As to quaternary structure, forms heterodimers with TAS1R3.

The protein localises to the cell membrane. Functionally, putative taste receptor. TAS1R2/TAS1R3 recognizes diverse natural and synthetic sweeteners. The chain is Taste receptor type 1 member 2 (TAS1R2) from Saimiri sciureus (Common squirrel monkey).